A 560-amino-acid chain; its full sequence is Zinc finger protein 250 (560 aa).

One can recognise a KRAB domain in the interval 22–93 (LTFEDVAVLL…DRKGAKKSQG (72 aa)). Residues K125, K136, K148, and K162 each participate in a glycyl lysine isopeptide (Lys-Gly) (interchain with G-Cter in SUMO2) cross-link. The C2H2-type 1 zinc finger occupies 199–221 (YMCVECGKCFGRSSHLLQHQRIH). A Glycyl lysine isopeptide (Lys-Gly) (interchain with G-Cter in SUMO2) cross-link involves residue K225. C2H2-type zinc fingers lie at residues 227 to 249 (YVCS…RRIH), 255 to 277 (YECN…HKIH), 283 to 305 (HECL…QRIH), 311 to 333 (YVCP…QRVH), 339 to 361 (HRCN…QRIH), 367 to 389 (YTCS…HNVH), and 395 to 417 (YECS…ERIH). A Glycyl lysine isopeptide (Lys-Gly) (interchain with G-Cter in SUMO2) cross-link involves residue K421. 5 C2H2-type zinc fingers span residues 423–445 (YACY…QRVH), 451–473 (YVCG…ERIH), 479–501 (FQCT…LRTH), 507–529 (YECN…QRIH), and 535–557 (YECG…QKVH).

This sequence belongs to the krueppel C2H2-type zinc-finger protein family.

It is found in the nucleus. Functionally, may be involved in transcriptional regulation. The chain is Zinc finger protein 250 (ZNF250) from Homo sapiens (Human).